We begin with the raw amino-acid sequence, 1399 residues long: DNA-directed RNA polymerase subunit beta' (1399 aa).

Residues cysteine 71, cysteine 73, cysteine 86, and cysteine 89 each contribute to the Zn(2+) site. Positions 462, 464, and 466 each coordinate Mg(2+). Zn(2+) is bound by residues cysteine 810, cysteine 884, cysteine 891, and cysteine 894. The disordered stretch occupies residues 1379 to 1399; sequence KQAAIVPSQPEPQPLALPPAE. Residues 1387 to 1399 show a composition bias toward pro residues; the sequence is QPEPQPLALPPAE.

This sequence belongs to the RNA polymerase beta' chain family. In terms of assembly, the RNAP catalytic core consists of 2 alpha, 1 beta, 1 beta' and 1 omega subunit. When a sigma factor is associated with the core the holoenzyme is formed, which can initiate transcription. Mg(2+) serves as cofactor. Zn(2+) is required as a cofactor.

The enzyme catalyses RNA(n) + a ribonucleoside 5'-triphosphate = RNA(n+1) + diphosphate. DNA-dependent RNA polymerase catalyzes the transcription of DNA into RNA using the four ribonucleoside triphosphates as substrates. This chain is DNA-directed RNA polymerase subunit beta', found in Bradyrhizobium sp. (strain ORS 278).